The following is a 92-amino-acid chain: Acylphosphatase (92 aa).

One can recognise an Acylphosphatase-like domain in the interval 5–92 (ATAAYVYGVV…TDYKGFTIRY (88 aa)). Catalysis depends on residues Arg20 and Asn38.

The protein belongs to the acylphosphatase family.

The enzyme catalyses an acyl phosphate + H2O = a carboxylate + phosphate + H(+). The chain is Acylphosphatase (acyP) from Pectobacterium atrosepticum (strain SCRI 1043 / ATCC BAA-672) (Erwinia carotovora subsp. atroseptica).